The chain runs to 273 residues: HTH-type transcriptional activator RhaS (273 aa).

Residues 174 to 272 (YQLLDWLQNN…SQSPRDLRSQ (99 aa)) enclose the HTH araC/xylS-type domain. 2 consecutive DNA-binding regions (H-T-H motif) follow at residues 191–212 (PELADRFALPLRTLHRQLKNKT) and 239–262 (VTDIAYLCGFGDSNHFSTLFKREF).

Binds DNA as a dimer.

The protein localises to the cytoplasm. Functionally, activates expression of the rhaBAD and rhaT operons. This is HTH-type transcriptional activator RhaS from Yersinia pseudotuberculosis serotype I (strain IP32953).